The chain runs to 312 residues: Glycine--tRNA ligase alpha subunit (312 aa).

Belongs to the class-II aminoacyl-tRNA synthetase family. In terms of assembly, tetramer of two alpha and two beta subunits.

The protein localises to the cytoplasm. It carries out the reaction tRNA(Gly) + glycine + ATP = glycyl-tRNA(Gly) + AMP + diphosphate. The protein is Glycine--tRNA ligase alpha subunit of Methylobacillus flagellatus (strain ATCC 51484 / DSM 6875 / VKM B-1610 / KT).